We begin with the raw amino-acid sequence, 745 residues long: Gamma-tubulin complex component 4 (745 aa).

It belongs to the TUBGCP family. As to quaternary structure, gamma-tubulin complex is composed of gamma-tubulin and GCP proteins.

Its subcellular location is the cytoplasm. It localises to the cytoskeleton. It is found in the microtubule organizing center. The protein localises to the spindle. Gamma-tubulin complex is necessary for microtubule nucleation at the microtubule organizing centers (MTOCs). Its function is as follows. Gamma-tubulin complex is essential for the control of microtubular network remodeling in the course of initiation and development of giant-feeding cells, and for the successful reproduction of nematodes (e.g. Meloidogyne spp.) in their plant hosts. This is Gamma-tubulin complex component 4 (GCP4) from Arabidopsis thaliana (Mouse-ear cress).